The primary structure comprises 348 residues: Hereditary hemochromatosis protein homolog (348 aa).

Positions 1–22 (MGPRARPALFFLILLRTVAAQG) are cleaved as a signal peptide. Positions 23 to 114 (RPPRSHSLRY…IMDNHNHSKE (92 aa)) are alpha-1. Residues 23-306 (RPPRSHSLRY…WEPSLSNTLV (284 aa)) lie on the Extracellular side of the membrane. N-linked (GlcNAc...) asparagine glycosylation is found at N110, N130, and N234. Residues 115-205 (SHTLQVILGC…ELGRGVLDQQ (91 aa)) are alpha-2. 2 disulfide bridges follow: C124–C187 and C225–C282. The tract at residues 206-297 (VPPLVKVTHH…GLDQPLTATW (92 aa)) is alpha-3. In terms of domain architecture, Ig-like C1-type spans 207 to 296 (PPLVKVTHHV…PGLDQPLTAT (90 aa)). The segment at 298–306 (EPSLSNTLV) is connecting peptide. Residues 307-330 (TGVISGIAVCVIIFLIGILFRILR) traverse the membrane as a helical segment. The Cytoplasmic segment spans residues 331-348 (KRQASRGAMGDYVLAECE).

This sequence belongs to the MHC class I family. As to quaternary structure, binds TFR through the extracellular domain in a pH-dependent manner.

It is found in the cell membrane. Its function is as follows. Binds to transferrin receptor (TFR) and reduces its affinity for iron-loaded transferrin. The chain is Hereditary hemochromatosis protein homolog (HFE) from Dicerorhinus sumatrensis (Sumatran rhinoceros).